A 274-amino-acid chain; its full sequence is Envelope glycoprotein L (274 aa).

The first 21 residues, 1–21 (MMPLLLLILLSTRNLLGAAQS), serve as a signal peptide directing secretion. One can recognise a gL betaherpesvirus-type domain in the interval 51–251 (VEHKCREALA…RSYRDRFPAV (201 aa)). Cys-156 and Cys-161 are disulfide-bonded.

The protein belongs to the herpesviridae glycoprotein L (gL) family. Betaherpesvirinae gL subfamily. In terms of assembly, interacts with glycoprotein H (gH); this interaction is necessary for the correct processing and cell surface expression of gH.

Its subcellular location is the virion membrane. The protein localises to the host cell membrane. It is found in the host Golgi apparatus. It localises to the host trans-Golgi network. The heterodimer glycoprotein H-glycoprotein L is required for the fusion of viral and plasma membranes leading to virus entry into the host cell. Acts as a functional inhibitor of gH and maintains gH in an inhibited form. Upon binding to host integrins, gL dissociates from gH leading to activation of the viral fusion glycoproteins gB and gH. This is Envelope glycoprotein L from Murid herpesvirus 1 (strain Smith) (MuHV-1).